The chain runs to 345 residues: Glycerol-3-phosphate dehydrogenase [NAD(P)+] (345 aa).

Positions 11, 12, 32, 33, and 106 each coordinate NADPH. The sn-glycerol 3-phosphate site is built by K106, G137, and S139. A141 contacts NADPH. K192, D245, S255, R256, and N257 together coordinate sn-glycerol 3-phosphate. The active-site Proton acceptor is K192. R256 is an NADPH binding site. Positions 280 and 282 each coordinate NADPH.

The protein belongs to the NAD-dependent glycerol-3-phosphate dehydrogenase family.

Its subcellular location is the cytoplasm. The catalysed reaction is sn-glycerol 3-phosphate + NAD(+) = dihydroxyacetone phosphate + NADH + H(+). It catalyses the reaction sn-glycerol 3-phosphate + NADP(+) = dihydroxyacetone phosphate + NADPH + H(+). Its pathway is membrane lipid metabolism; glycerophospholipid metabolism. Its activity is regulated as follows. Does not seem to be inhibited by sn-glycerol 3-phosphate, in contrast to the E.coli homolog enzyme which is very sensitive to allosteric inhibition by G3P. Functionally, catalyzes the reduction of the glycolytic intermediate dihydroxyacetone phosphate (DHAP) to sn-glycerol 3-phosphate (G3P), the key precursor for phospholipid synthesis. In Bacillus subtilis (strain 168), this protein is Glycerol-3-phosphate dehydrogenase [NAD(P)+].